We begin with the raw amino-acid sequence, 453 residues long: Glutamate-rich protein 5 (453 aa).

Disordered regions lie at residues 1–38 (MGCS…ALGR), 66–377 (NGVQ…EHPA), and 394–453 (TNEE…HSML). Residues 11–21 (AGDDNRLRSAT) show a composition bias toward basic and acidic residues. Position 155 is a phosphoserine (Ser-155). Polar residues-rich tracts occupy residues 230 to 243 (LQET…SQPL) and 271 to 283 (QETL…SQLR). Composition is skewed to basic and acidic residues over residues 305 to 332 (EEEK…EHGG), 364 to 374 (IQPERTVESME), and 394 to 403 (TNEEDQHIEG). Over residues 404-413 (ETGETVETEM) the composition is skewed to acidic residues. Residues 414–424 (ESEKVSEGAET) show a composition bias toward basic and acidic residues.

The polypeptide is Glutamate-rich protein 5 (ERICH5) (Bos taurus (Bovine)).